We begin with the raw amino-acid sequence, 130 residues long: Small ribosomal subunit protein uS11c (130 aa).

The protein belongs to the universal ribosomal protein uS11 family. In terms of assembly, part of the 30S ribosomal subunit.

The protein localises to the plastid. It localises to the chloroplast. The sequence is that of Small ribosomal subunit protein uS11c from Bigelowiella natans (Pedinomonas minutissima).